We begin with the raw amino-acid sequence, 260 residues long: Cytochrome c oxidase subunit 2 (260 aa).

Residues 1-43 (MILRSLSCRFLTIALCDAAEPWQLGFQDAATPMMQGIIDLHHD) are Mitochondrial intermembrane-facing. Residues 44-64 (IFFFLILILVFVLWMLVRALW) traverse the membrane as a helical segment. The Mitochondrial matrix segment spans residues 65–84 (HFNEQTNPIPQRIVHGTTIE). A helical membrane pass occupies residues 85 to 105 (IIWTIFPSVILLFIAIPSFAL). Over 106–260 (LYSMDGVLVD…VSNQLILQTN (155 aa)) the chain is Mitochondrial intermembrane. Cu cation-binding residues include His189, Cys224, Glu226, Cys228, His232, and Met235. Glu226 provides a ligand contact to Mg(2+).

Belongs to the cytochrome c oxidase subunit 2 family. In terms of assembly, component of the cytochrome c oxidase (complex IV, CIV), a multisubunit enzyme composed of a catalytic core of 3 subunits and several supernumerary subunits. The complex exists as a monomer or a dimer and forms supercomplexes (SCs) in the inner mitochondrial membrane with ubiquinol-cytochrome c oxidoreductase (cytochrome b-c1 complex, complex III, CIII). The cofactor is Cu cation.

The protein resides in the mitochondrion inner membrane. It carries out the reaction 4 Fe(II)-[cytochrome c] + O2 + 8 H(+)(in) = 4 Fe(III)-[cytochrome c] + 2 H2O + 4 H(+)(out). Functionally, component of the cytochrome c oxidase, the last enzyme in the mitochondrial electron transport chain which drives oxidative phosphorylation. The respiratory chain contains 3 multisubunit complexes succinate dehydrogenase (complex II, CII), ubiquinol-cytochrome c oxidoreductase (cytochrome b-c1 complex, complex III, CIII) and cytochrome c oxidase (complex IV, CIV), that cooperate to transfer electrons derived from NADH and succinate to molecular oxygen, creating an electrochemical gradient over the inner membrane that drives transmembrane transport and the ATP synthase. Cytochrome c oxidase is the component of the respiratory chain that catalyzes the reduction of oxygen to water. Electrons originating from reduced cytochrome c in the intermembrane space (IMS) are transferred via the dinuclear copper A center (CU(A)) of subunit 2 and heme A of subunit 1 to the active site in subunit 1, a binuclear center (BNC) formed by heme A3 and copper B (CU(B)). The BNC reduces molecular oxygen to 2 water molecules using 4 electrons from cytochrome c in the IMS and 4 protons from the mitochondrial matrix. The polypeptide is Cytochrome c oxidase subunit 2 (COX2) (Triticum aestivum (Wheat)).